Consider the following 638-residue polypeptide: Zona pellucida sperm-binding protein 1 (638 aa).

A signal peptide spans Met1 to Gly25. Topologically, residues Arg26–Pro601 are extracellular. N-linked (GlcNAc...) asparagine glycosylation is present at Asn76. Positions Leu165–Ser175 are enriched in polar residues. Positions Leu165–Leu208 are disordered. Residues Glu234–Asn274 form the P-type domain. Intrachain disulfides connect Cys236–Cys261, Cys245–Cys260, and Cys255–Cys270. Residues Gln279–Gln553 enclose the ZP domain. An N-linked (GlcNAc...) asparagine glycan is attached at Asn379. A disulfide bridge connects residues Cys457 and Cys478. Residues Gly549–Asn594 are disordered. The propeptide at Arg554–Gln638 is removed in mature form. N-linked (GlcNAc...) asparagine glycans are attached at residues Asn561 and Asn596. A helical transmembrane segment spans residues Leu602–Val622. Over Gly623 to Gln638 the chain is Cytoplasmic.

It belongs to the ZP domain family. ZPB subfamily. In terms of assembly, polymers of ZP2 and ZP3 organized into long filaments cross-linked by ZP1 homodimers. Interacts with ZP3. In terms of processing, proteolytically cleaved before the transmembrane segment to yield the secreted ectodomain incorporated in the zona pellucida. O-glycosylated. Expressed in oocytes (at protein level).

Its subcellular location is the zona pellucida. It is found in the cell membrane. In terms of biological role, component of the zona pellucida, an extracellular matrix surrounding oocytes which mediates sperm binding, induction of the acrosome reaction and prevents post-fertilization polyspermy. The zona pellucida is composed of 3 to 4 glycoproteins, ZP1, ZP2, ZP3, and ZP4. ZP1 ensures the structural integrity of the zona pellucida. This Homo sapiens (Human) protein is Zona pellucida sperm-binding protein 1 (ZP1).